A 23-amino-acid chain; its full sequence is Acidic phospholipase A2 CTs-A1 (23 aa).

Ca(2+) is required as a cofactor. Post-translationally, contains 7 disulfide bonds. Expressed by the venom gland.

Its subcellular location is the secreted. The enzyme catalyses a 1,2-diacyl-sn-glycero-3-phosphocholine + H2O = a 1-acyl-sn-glycero-3-phosphocholine + a fatty acid + H(+). Snake venom phospholipase A2 (PLA2) that shows a moderate inhibition of ADP-induced human platelet aggregation when tested on platelet rich plasma. Exhibits moderate hydrolytic activities and prefers the anionic micelles (dPPC with deoxycholate) to the zwitterionic micelles (dPPC with Triton X-100). PLA2 catalyzes the calcium-dependent hydrolysis of the 2-acyl groups in 3-sn-phosphoglycerides. This chain is Acidic phospholipase A2 CTs-A1, found in Trimeresurus stejnegeri (Chinese green tree viper).